Here is a 142-residue protein sequence, read N- to C-terminus: Putative transmembrane protein INAFM1 (142 aa).

The span at 1–19 shows a compositional bias: gly residues; sequence MRGTSCVGGGAESPGGAGL. The interval 1–22 is disordered; it reads MRGTSCVGGGAESPGGAGLSEG. Residues 36–56 traverse the membrane as a helical segment; the sequence is YFLCVSLAAVLLAVYYGLIWV. 2 disordered regions span residues 61-83 and 99-142; these read PAAPAGPQPSAPSPPCAARPGVP and VPGG…RRPG. The span at 64-83 shows a compositional bias: pro residues; the sequence is PAGPQPSAPSPPCAARPGVP. The segment covering 99-111 has biased composition (low complexity); that stretch reads VPGGPRPQLQLPL. The segment covering 117 to 142 has biased composition (basic and acidic residues); that stretch reads YSDPDRRPSRQTPRETPEAAEGRRPG.

The protein localises to the membrane. This chain is Putative transmembrane protein INAFM1, found in Homo sapiens (Human).